A 652-amino-acid polypeptide reads, in one-letter code: Bifunctional protein ThiO/ThiG (652 aa).

The tract at residues 1–366 (MTRDIVIIGG…HYSRSQKQAS (366 aa)) is thiO. Residues 5–19 (IVII…AIAV) and 44–46 (AGM) contribute to the FAD site. Residue E52 participates in glycine binding. V173 provides a ligand contact to FAD. Glycine contacts are provided by R301 and R327. Position 325–331 (325–331 (HYRNGIL)) interacts with FAD. The interval 393 to 652 (PLIIAGKSFH…ASSPVTGTIS (260 aa)) is thiG. K494 (schiff-base intermediate with DXP) is an active-site residue. 1-deoxy-D-xylulose 5-phosphate contacts are provided by residues G555, 581–582 (AG), and 603–604 (NS).

In the N-terminal section; belongs to the DAO family. ThiO subfamily. The protein in the C-terminal section; belongs to the ThiG family. In terms of assembly, interacts with ThiH and ThiS. FAD is required as a cofactor.

It is found in the cytoplasm. It catalyses the reaction glycine + O2 + H2O = glyoxylate + H2O2 + NH4(+). It carries out the reaction [ThiS sulfur-carrier protein]-C-terminal-Gly-aminoethanethioate + 2-iminoacetate + 1-deoxy-D-xylulose 5-phosphate = [ThiS sulfur-carrier protein]-C-terminal Gly-Gly + 2-[(2R,5Z)-2-carboxy-4-methylthiazol-5(2H)-ylidene]ethyl phosphate + 2 H2O + H(+). The protein operates within cofactor biosynthesis; thiamine diphosphate biosynthesis. Functionally, catalyzes the FAD-dependent oxidative deamination of glycine. Is essential for thiamine biosynthesis since the oxidation of glycine catalyzed by ThiO generates the glycine imine intermediate (dehydroglycine) required for the biosynthesis of the thiazole ring of thiamine pyrophosphate. Catalyzes the rearrangement of 1-deoxy-D-xylulose 5-phosphate (DXP) to produce the thiazole phosphate moiety of thiamine. Sulfur is provided by the thiocarboxylate moiety of the carrier protein ThiS. In vitro, sulfur can be provided by H(2)S. The polypeptide is Bifunctional protein ThiO/ThiG (thiO/thiG) (Nostoc sp. (strain PCC 7120 / SAG 25.82 / UTEX 2576)).